The chain runs to 326 residues: MNMSQNLDFIHSAQRTIGLERDAVDSLLARIGDDFVKACELLLAGKGRVVVVGMGKSGHVGKKIAATLASTGTPSFFVHPAEASHGDMGMITKDDVVLALSNSGSTAEIVTLLPLIKRLGITLISMTGNPESPLAKAAEVNLDASVGQEACPLNLAPTSSTTVTLVLGDALAIALLEARGFTAEDFAFSHPGGALGRRLLLKVEDVMHVGEGLPQVLLGTSLTGALMEMTRKGLGMTVVLDEHGKLAGIFTDGDLRRALDRGIDVRQVTIDQVMTVHGKTVRAEILAAEALKIMEDNKIGALVVVDADDRPVGALNMHDLLRAGVM.

The SIS domain maps to 38–181 (ACELLLAGKG…AIALLEARGF (144 aa)). Substrate-binding positions include 72-73 (GT), H79, H85, 111-120 (TLLPLIKRLG), and 145-147 (SVG). Zn(2+) is bound at residue H79. 2 CBS domains span residues 207–265 (MHVG…GIDV) and 274–326 (MTVH…AGVM).

It belongs to the SIS family. GutQ/KpsF subfamily. As to quaternary structure, homotetramer.

The catalysed reaction is D-arabinose 5-phosphate = D-ribulose 5-phosphate. Its pathway is carbohydrate biosynthesis; 3-deoxy-D-manno-octulosonate biosynthesis; 3-deoxy-D-manno-octulosonate from D-ribulose 5-phosphate: step 1/3. It functions in the pathway bacterial outer membrane biogenesis; lipopolysaccharide biosynthesis. Its function is as follows. Involved in the biosynthesis of 3-deoxy-D-manno-octulosonate (KDO), a unique 8-carbon sugar component of lipopolysaccharides (LPSs). Catalyzes the reversible aldol-ketol isomerization between D-ribulose 5-phosphate (Ru5P) and D-arabinose 5-phosphate (A5P). In Pseudomonas aeruginosa (strain ATCC 15692 / DSM 22644 / CIP 104116 / JCM 14847 / LMG 12228 / 1C / PRS 101 / PAO1), this protein is Arabinose 5-phosphate isomerase KdsD (kdsD).